Here is a 516-residue protein sequence, read N- to C-terminus: Cytochrome P450 monooxygenase dtxS2 (516 aa).

The chain crosses the membrane as a helical span at residues 23–43; the sequence is ILASVIVLLGLKVATILYTAF. A glycan (N-linked (GlcNAc...) asparagine) is linked at asparagine 187. The chain crosses the membrane as a helical span at residues 229–249; it reads VLVPLLVFPYISWLLVWWLLS. Position 458 (cysteine 458) interacts with heme.

Belongs to the cytochrome P450 family. It depends on heme as a cofactor.

It localises to the membrane. It functions in the pathway secondary metabolite biosynthesis. Cytochrome P450 monooxygenase; part of the gene cluster that mediates the biosynthesis of destruxins, insecticidal cyclic hexadepsipeptides which induce flaccid paralysis and visceral muscle contraction in insects through targeting the calcium channels and vacuolar-type ATPases. The aldo-keto reductase dtxS3 converts alpha-ketoisocaproic acid from deaminated leucine into alpha-hydroxyisocaproic acid (HIC), which is the first substrate for destruxin assembly by dtxS1. L-aspartate decarboxylase dtxS4 converts aspartic acid into beta-alanine, the last substrate for the destruxin assembly line performed by dtxS1. The nonribosomal peptide synthetase dtxS1 synthesizes destruxins B and B2, whereas the cytochrome P450 monooxygenase dtxS2 is required to convert destruxin B into other destruxin derivatives, including destructins C, D, A and E. Destruxin E-diol (ED) is further produced in a non-enzymatic manner from destruxin E. Destruxins play an important role in virulence and escape from insect host immune defenses. The polypeptide is Cytochrome P450 monooxygenase dtxS2 (Metarhizium robertsii (strain ARSEF 23 / ATCC MYA-3075) (Metarhizium anisopliae (strain ARSEF 23))).